The sequence spans 389 residues: Chalcone synthase J (389 aa).

Residue Cys-164 is part of the active site.

The protein belongs to the thiolase-like superfamily. Chalcone/stilbene synthases family.

The enzyme catalyses (E)-4-coumaroyl-CoA + 3 malonyl-CoA + 3 H(+) = 2',4,4',6'-tetrahydroxychalcone + 3 CO2 + 4 CoA. Its pathway is secondary metabolite biosynthesis; flavonoid biosynthesis. Its function is as follows. The primary product of this enzyme is 4,2',4',6'-tetrahydroxychalcone (also termed naringenin-chalcone or chalcone) which can under specific conditions spontaneously isomerize into naringenin. The polypeptide is Chalcone synthase J (CHSJ) (Petunia hybrida (Petunia)).